The sequence spans 296 residues: Phosphatidylserine decarboxylase proenzyme (296 aa).

Catalysis depends on charge relay system; for autoendoproteolytic cleavage activity residues Asp-113, His-169, and Ser-256. Catalysis depends on Ser-256, which acts as the Schiff-base intermediate with substrate; via pyruvic acid; for decarboxylase activity. A Pyruvic acid (Ser); by autocatalysis modification is found at Ser-256.

This sequence belongs to the phosphatidylserine decarboxylase family. PSD-B subfamily. Prokaryotic type II sub-subfamily. As to quaternary structure, heterodimer of a large membrane-associated beta subunit and a small pyruvoyl-containing alpha subunit. The cofactor is pyruvate. Post-translationally, is synthesized initially as an inactive proenzyme. Formation of the active enzyme involves a self-maturation process in which the active site pyruvoyl group is generated from an internal serine residue via an autocatalytic post-translational modification. Two non-identical subunits are generated from the proenzyme in this reaction, and the pyruvate is formed at the N-terminus of the alpha chain, which is derived from the carboxyl end of the proenzyme. The autoendoproteolytic cleavage occurs by a canonical serine protease mechanism, in which the side chain hydroxyl group of the serine supplies its oxygen atom to form the C-terminus of the beta chain, while the remainder of the serine residue undergoes an oxidative deamination to produce ammonia and the pyruvoyl prosthetic group on the alpha chain. During this reaction, the Ser that is part of the protease active site of the proenzyme becomes the pyruvoyl prosthetic group, which constitutes an essential element of the active site of the mature decarboxylase.

The protein resides in the cell membrane. It catalyses the reaction a 1,2-diacyl-sn-glycero-3-phospho-L-serine + H(+) = a 1,2-diacyl-sn-glycero-3-phosphoethanolamine + CO2. It functions in the pathway phospholipid metabolism; phosphatidylethanolamine biosynthesis; phosphatidylethanolamine from CDP-diacylglycerol: step 2/2. In terms of biological role, catalyzes the formation of phosphatidylethanolamine (PtdEtn) from phosphatidylserine (PtdSer). This is Phosphatidylserine decarboxylase proenzyme from Clostridium botulinum (strain Eklund 17B / Type B).